The chain runs to 247 residues: MNVLSCSINTLKGLYDISGVEVGQHFYWQIGGFQVHAQVLITSWVVIAILLGSATLAVRNPQTIPTDGQNFFEYVLEFIRDVSKTQIGEEYGSWVPFIGTMFLFIFVSNWSGALLPWKIIQLPHGELAAPTNDINTTVALALLTSVAYFYAGLTKKGLGYFGKYIQPTPILLPINILEDFTKPLSLSFRLFGNILADELVVVVLVSLVPSIVPIPVMFLGLFTSGIQALIFATLAAAYIGESMEGHH.

Transmembrane regions (helical) follow at residues 38–58 (QVLITSWVVIAILLGSATLAV), 95–115 (VPFIGTMFLFIFVSNWSGALL), 134–154 (INTTVALALLTSVAYFYAGLT), 199–219 (LVVVVLVSLVPSIVPIPVMFL), and 220–240 (GLFTSGIQALIFATLAAAYIG).

Belongs to the ATPase A chain family. In terms of assembly, F-type ATPases have 2 components, CF(1) - the catalytic core - and CF(0) - the membrane proton channel. CF(1) has five subunits: alpha(3), beta(3), gamma(1), delta(1), epsilon(1). CF(0) has four main subunits: a, b, b' and c.

The protein resides in the plastid. Its subcellular location is the chloroplast thylakoid membrane. Functionally, key component of the proton channel; it plays a direct role in the translocation of protons across the membrane. In Vitis vinifera (Grape), this protein is ATP synthase subunit a, chloroplastic.